The sequence spans 2494 residues: Nuclear receptor corepressor 1 (2494 aa).

The segment covering 1–33 (MSSSGYPPNQGAFSTEQGRYSSHPVQYTFPSSR) has biased composition (polar residues). Disordered regions lie at residues 1 to 38 (MSSS…QQEF), 53 to 106 (LLQQ…PRLD), 134 to 170 (SEVK…KLSK), and 198 to 222 (QQQL…PVEQ). Residues 71-82 (PVSDRPQDRRQG) show a composition bias toward basic and acidic residues. Positions 83–92 (YEQQYHSVTQ) are enriched in polar residues. Basic and acidic residues-rich tracts occupy residues 93–106 (NEHE…PRLD), 134–148 (SEVK…KHET), and 204–213 (EAAKPPEPEK). The interaction with tbl1xr1 stretch occupies residues 154–304 (SGQPGEEQEA…REQNICQRYD (151 aa)). Residues 168–208 (LSKEELIQSMDRVDREIAKVEQQILKLKKKQQQLEEEAAKP) adopt a coiled-coil conformation. One can recognise an SANT 1 domain in the interval 427-478 (QFMNVWTDHEKEIFKEKFVQHPKNFGLIASYLERKTVSDCVLYYYLTKKNEN). 8 disordered regions span residues 488 to 638 (PKRR…VEHG), 671 to 913 (NLLQ…LDSK), 981 to 1007 (RQRQ…PNMD), 1081 to 1124 (GARL…GTPG), 1413 to 1434 (IHEI…ESSR), 1488 to 1585 (MGER…TQRE), 1745 to 1845 (LAFP…QESI), and 1912 to 1987 (EVVK…AHTK). Basic and acidic residues-rich tracts occupy residues 502–525 (AQEE…KEEE) and 535–548 (KEEL…RTDA). Residues 502-549 (AQEEKEIEKVEEEKAERNDKKEEERREEEEKEEKEELRDGTKDRTDAI) are a coiled coil. Residues 582–616 (ASEAAAAANAASTATTAPATTTSTTATTTTAALVP) are compositionally biased toward low complexity. The segment covering 617-629 (VAPPPEEPTPPPT) has biased composition (pro residues). The SANT 2 domain occupies 622-668 (EEPTPPPTQEQSLVEHGRNWGAIAKMVGSKSESQCKNFYFNYKRRHN). The span at 692–702 (QCESVASTVSA) shows a compositional bias: polar residues. A coiled-coil region spans residues 698–726 (STVSAQEDEENEASNEEENAEDSEGAENS). A compositionally biased stretch (acidic residues) spans 703–722 (QEDEENEASNEEENAEDSEG). Low complexity predominate over residues 723–741 (AENSSDTESAPSPSPAEAA). Residues 766-779 (ASKSVSDSSPTPTV) show a composition bias toward polar residues. Over residues 829 to 864 (AEPDEVESKPSESAEVKIEEDTKDQDMERLMDRAEA) the composition is skewed to basic and acidic residues. Polar residues-rich tracts occupy residues 881–892 (ESQSDNDSSATC), 993–1004 (MSASPGNMSKSP), and 1104–1124 (ATSS…GTPG). Basic and acidic residues predominate over residues 1488–1504 (MGERSKYEDTKSSEAIR). A compositionally biased stretch (polar residues) spans 1508 to 1519 (TSVVSSGPSVLR). The span at 1548 to 1561 (PSPMSRSSPMARSA) shows a compositional bias: low complexity. Positions 1771 to 1810 (VSAERERERERDRERDREREKEQRERERDRERERERLAAA) form a coiled coil. The segment covering 1773 to 1807 (AERERERERDRERDREREKEQRERERDRERERERL) has biased composition (basic and acidic residues). Over residues 1835-1845 (PSPSVRAQESI) the composition is skewed to polar residues. Positions 1914-1935 (VKPKEMKHDPARSEESLSRRNV) are enriched in basic and acidic residues. Residues 1953–1972 (QSPYTSSSFSGSKSQGQPSP) show a composition bias toward low complexity. A compositionally biased stretch (basic and acidic residues) spans 1978-1987 (AGKEKTAHTK). Positions 2008–2012 (IDVII) match the CORNR box 1 motif. Residues 2018 to 2105 (SDKDGRDRNS…PSPQQTIPGH (88 aa)) form a disordered region. The segment covering 2027–2036 (SQSSDSSSSH) has biased composition (low complexity). Positions 2039–2048 (HRYDAPRDTI) are enriched in basic and acidic residues. Residues 2088-2102 (RYRQQQESPSPQQTI) show a composition bias toward polar residues. A CORNR box 2 motif is present at residues 2119 to 2123 (ICQII). Residues 2135-2177 (QALQQPPASTFQSTNPSSTPVRTKASSRFSPESQVQPVHNQRP) show a composition bias toward polar residues. The segment at 2135-2216 (QALQQPPAST…YEPISPPQAP (82 aa)) is disordered. A compositionally biased stretch (basic and acidic residues) spans 2186 to 2205 (VLDRPRGRPGKSPDRGHISE). Residues 2322–2326 (LEDII) carry the CORNR box 3 motif. Disordered regions lie at residues 2346-2413 (GVAQ…SVHS) and 2446-2494 (MLNS…DSDE). Residues 2376–2390 (HKQKLISKYGSRKTK) are compositionally biased toward basic residues. Polar residues-rich tracts occupy residues 2446–2472 (MLNS…QQSR) and 2485–2494 (QYETLSDSDE).

Belongs to the N-CoR nuclear receptor corepressors family. Forms a large corepressor complex that contains sin3a/b, histone deacetylases hdac1 and hdac2, rbbp4 and possibly rbbp7. Interacts with the thyroid receptor (TR, composed of rxra and thrb) and the retinoid acid receptor (RAR, composed of rxra and rara) in the absence of ligand. Interacts with tbl1xr1. Interacts with zbtb33/kaiso.

Its subcellular location is the nucleus. In terms of biological role, mediates transcriptional repression by certain nuclear receptors. Participates in complexes which promote histone deacetylation and the formation of repressive chromatin structures which may impede access by the basal transcription machinery. In association with hdac3, may play a role in the regulation of the circadian clock. The protein is Nuclear receptor corepressor 1 (ncor1) of Xenopus tropicalis (Western clawed frog).